The chain runs to 103 residues: Salivary thrombin inhibitor anophelin (103 aa).

The signal sequence occupies residues 1–21 (MASKLFVLAFLCLALVVVVQS). The segment at 24 to 103 (QYARGDVPTY…PAASSSESDE (80 aa)) is disordered. Positions 56–68 (EEFDPSLLEEHAD) are blocks exosite I of host thrombin. The blocks active site cleft of host thrombin in a reverse direction compared to substrates stretch occupies residues 74–77 (DPGR). Positions 91–103 (ASAPAASSSESDE) are enriched in low complexity.

The protein belongs to the anophelin family. As to quaternary structure, interacts with human F2 (thrombin); the interaction results in thrombin inhibition. Female salivary gland (at protein level). Not detected in female midgut, head, carcass and male tissues (at protein level).

It is found in the secreted. Increasing concentration of NaCl decreases affinity for thrombin. Functionally, salivary protein with anticoagulant activity that inhibits host thrombin (F2); binds to the proteinase in a reverse orientation (opposite to substrates). The polypeptide is Salivary thrombin inhibitor anophelin (Anopheles gambiae (African malaria mosquito)).